A 695-amino-acid chain; its full sequence is MKNDIKKVRNIGISAHIDSGKTTLTERILFYTKRIHAMHDVKGKDGVGATMDSMELERERGITISSAATFCTWGDHEVNIIDTPGHVDFTIEVERALRVLDGAILVLCAVGGVQSQSITVDAQMKRYKVPCVAFVNKCDRSGANPARVVEQLKTRLGHNALLMQLPIGLEADFQGIVDLISMKAVYFDGAGGELLRTEAVPESLLPEAISRREELIDSVSLFSDSLTEAILEGTEISEVMIMEAVRQGTLERKITPVFIGSAYKNKGIQPLLDAVTRYLPCPADIENSALDLSREEAPVQLTSNTEDPVVALAFKLEDGIYGQLTYIRVYQGILSRGATVVNARDGKKVRIGRLVRMHADQMEDIEAIHAGYIGALFGLECQSGDTFAAQGLNLAMTSMFVPEPVISLAIVPKDKKSMVNMSKALNRFTKEDPTFRTHLDPETSETIIEGMGELHLDIYVERIRREYNAEVTTGNPRVAYRETITQKAAFNYTHRKQTGGSGQYGRVAGYIEPLSDEDFLFENKITGGAIPTQFIPACEKGFRMSMAKGPKMEFPVTGVKVVIDDGAFHAVDSSDMAFQAAARGAFREAYNKAKPVILEPIMKVVVETPNEFQGAVMGLLNQRRGMIVGTQDEGQTCVIEAQTPLAEMFGFSTVIRSATQGKAQFTMEFSAYRQVPQSIAEKITEEVAKRKKSAA.

The 279-residue stretch at 6 to 284 (KKVRNIGISA…VTRYLPCPAD (279 aa)) folds into the tr-type G domain. Residues 15-22 (AHIDSGKT), 82-86 (DTPGH), and 136-139 (NKCD) contribute to the GTP site.

The protein belongs to the TRAFAC class translation factor GTPase superfamily. Classic translation factor GTPase family. EF-G/EF-2 subfamily.

It is found in the cytoplasm. In terms of biological role, catalyzes the GTP-dependent ribosomal translocation step during translation elongation. During this step, the ribosome changes from the pre-translocational (PRE) to the post-translocational (POST) state as the newly formed A-site-bound peptidyl-tRNA and P-site-bound deacylated tRNA move to the P and E sites, respectively. Catalyzes the coordinated movement of the two tRNA molecules, the mRNA and conformational changes in the ribosome. The chain is Elongation factor G 1 from Syntrophus aciditrophicus (strain SB).